A 4391-amino-acid polypeptide reads, in one-letter code: Basement membrane-specific heparan sulfate proteoglycan core protein (4391 aa).

The N-terminal stretch at 1–21 (MGWRAAGALLLALLLHGRLLA) is a signal peptide. An O-linked (GalNAc...) threonine glycan is attached at threonine 42. Serine 65, serine 71, and serine 76 each carry an O-linked (Xyl...) (heparan sulfate) serine glycan. Residues 80–191 (QMVYFRALVN…QGFQFRRLGT (112 aa)) form the SEA domain. Residue asparagine 89 is glycosylated (N-linked (GlcNAc...) asparagine). LDL-receptor class A domains follow at residues 198–235 (ACTEAEFACHSYNECVALEYRCDRRPDCRDMSDELNCE), 284–320 (PCGPQEAACRNGHCIPRDYLCDGQEDCEDGSDELDCG), 324–360 (PCEPNEFPCGNGHCALKLWRCDGDFDCEDRTDEANCP), and 367–404 (VCGPTQFRCVSTNMCIPASFHCDEESDCPDRSDEFGCM). Cystine bridges form between cysteine 199-cysteine 212, cysteine 206-cysteine 225, cysteine 219-cysteine 234, cysteine 285-cysteine 297, cysteine 292-cysteine 310, cysteine 304-cysteine 319, cysteine 325-cysteine 337, cysteine 332-cysteine 350, cysteine 344-cysteine 359, cysteine 368-cysteine 381, cysteine 375-cysteine 394, and cysteine 388-cysteine 403. An Ig-like C2-type 1 domain is found at 405–504 (PPQVVTPPRE…VLELVPQRGP (100 aa)). Residues 521-530 (CFCFGITSVC) form the Laminin EGF-like 1; first part domain. In terms of domain architecture, Laminin IV type A 1 spans 538 to 730 (DQIRLRFDQP…SHGRAHSVEE (193 aa)). Residue asparagine 554 is glycosylated (N-linked (GlcNAc...) asparagine). One can recognise a Laminin EGF-like 1; second part domain in the interval 731 to 763 (CRCPIGYSGLSCESCDAHFTRVPGGPYLGTCSG). Intrachain disulfides connect cysteine 764–cysteine 773, cysteine 766–cysteine 780, cysteine 783–cysteine 792, cysteine 795–cysteine 811, cysteine 814–cysteine 829, cysteine 816–cysteine 839, cysteine 842–cysteine 851, cysteine 854–cysteine 869, cysteine 879–cysteine 892, cysteine 894–cysteine 903, and cysteine 906–cysteine 921. 2 Laminin EGF-like domains span residues 764-813 (CNCN…SCRP) and 814-871 (CPCP…KCRP). One can recognise a Laminin EGF-like 4; truncated domain in the interval 879-923 (CDERGSMGTSGEACRCKNNVVGRLCNECADGSFHLSTRNPDGCLK). The Laminin EGF-like 5; first part domain occupies 924 to 933 (CFCMGVSRHC). One can recognise a Laminin IV type A 2 domain in the interval 941-1125 (AQLHGASEEP…GQDPALEVEQ (185 aa)). Residues 1126 to 1158 (CSCPPGYRGPSCQDCDTGYTRTPSGLYLGTCER) enclose the Laminin EGF-like 5; second part domain. Cystine bridges form between cysteine 1159–cysteine 1168, cysteine 1161–cysteine 1175, cysteine 1178–cysteine 1187, cysteine 1190–cysteine 1206, cysteine 1209–cysteine 1224, cysteine 1211–cysteine 1234, cysteine 1237–cysteine 1246, cysteine 1249–cysteine 1263, cysteine 1275–cysteine 1287, cysteine 1277–cysteine 1293, cysteine 1295–cysteine 1304, and cysteine 1307–cysteine 1322. Laminin EGF-like domains follow at residues 1159–1208 (CSCH…DCQL), 1209–1265 (CPCY…PCQR), and 1275–1324 (CNCD…GCLP). A Laminin EGF-like 9; first part domain is found at 1325–1334 (CFCMGITQQC). One can recognise a Laminin IV type A 3 domain in the interval 1344-1529 (ISTHFAPGDF…NRPRALEVEE (186 aa)). The region spanning 1530–1562 (CRCPPGYIGLSCQDCAPGYTRTGSGLYLGHCEL) is the Laminin EGF-like 9; second part domain. Disulfide bonds link cysteine 1563/cysteine 1572, cysteine 1565/cysteine 1579, cysteine 1582/cysteine 1591, cysteine 1594/cysteine 1610, cysteine 1613/cysteine 1628, cysteine 1615/cysteine 1638, cysteine 1641/cysteine 1650, and cysteine 1653/cysteine 1668. Laminin EGF-like domains lie at 1563–1612 (CECN…DCQP) and 1613–1670 (CACP…QCLP). Ig-like C2-type domains follow at residues 1677–1771 (LVVE…SKPI), 1772–1865 (TVTV…TLSA), 1866–1955 (PVVS…GGGG), 1956–2051 (PRVQ…ASPP), 2052–2151 (PVKI…PGST), 2152–2244 (RPIR…PGPI), 2245–2340 (PPVR…AGST), 2341–2436 (QPIR…LGVT), 2437–2533 (PTVR…QGVA), 2534–2629 (YPVR…PSVS), 2630–2726 (PPIR…PGSS), 2727–2826 (MPIR…PGGA), 2827–2924 (PPIR…PGLA), 2925–3021 (QPIY…RLRS), 3022–3112 (PVIS…HGPP), 3113–3211 (TVSV…APGA), 3212–3298 (PQVQ…VESP), 3299–3399 (PYAT…AGST), 3400–3488 (PTVQ…ALPS), 3489–3574 (VLIN…LVQA), and 3575–3662 (LPQI…PERV). N-linked (GlcNAc...) asparagine glycosylation occurs at asparagine 1755. Asparagine 2121 carries N-linked (GlcNAc...) asparagine glycosylation. The tract at residues 2994–3014 (ASGPGPEQEASFTVTVPPSEG) is disordered. O-linked (Xyl...) (chondroitin sulfate) serine glycosylation occurs at serine 2995. The segment covering 3003 to 3014 (ASFTVTVPPSEG) has biased composition (polar residues). Asparagine 3072 and asparagine 3105 each carry an N-linked (GlcNAc...) asparagine glycan. The N-linked (GlcNAc...) asparagine glycan is linked to asparagine 3279. A Laminin G-like 1 domain is found at 3663–3843 (VPYFTQTPYS…DLNLTAHGIS (181 aa)). 2 N-linked (GlcNAc...) asparagine glycosylation sites follow: asparagine 3780 and asparagine 3836. 7 disulfide bridges follow: cysteine 3819–cysteine 3845, cysteine 3848–cysteine 3859, cysteine 3853–cysteine 3869, cysteine 3871–cysteine 3880, cysteine 3888–cysteine 3899, cysteine 3893–cysteine 3910, and cysteine 3912–cysteine 3921. 2 EGF-like domains span residues 3844 to 3881 (HCPTCRDRPCQNGGQCHDSESSSYVCVCPAGFTGSRCE) and 3884 to 3922 (QALHCHPEACGPDATCVNRPDGRGYTCRCHLGRSGLRCE). Positions 3928-4103 (TTPSLSGAGS…LGSQGIGQCY (176 aa)) constitute a Laminin G-like 2 domain. Serine 3933 carries an O-linked (Xyl...) (chondroitin sulfate) serine glycan. An N-linked (GlcNAc...) asparagine glycan is attached at asparagine 4068. Cystine bridges form between cysteine 4076–cysteine 4102, cysteine 4108–cysteine 4119, cysteine 4113–cysteine 4129, cysteine 4131–cysteine 4140, cysteine 4147–cysteine 4159, cysteine 4153–cysteine 4164, and cysteine 4166–cysteine 4175. EGF-like domains lie at 4104-4141 (DSSPCERQPCQHGATCMPAGEYEFQCLCRDGFKGDLCE) and 4143-4176 (EENPCQLREPCLHGGTCQGTRCLCLPGFSGPRCQ). Positions 4149 to 4151 (LRE) are mediates motor neuron attachment. O-linked (Xyl...) (chondroitin sulfate) serine glycans are attached at residues serine 4179 and serine 4193. In terms of domain architecture, Laminin G-like 3 spans 4201-4389 (QYGAYFHDDG…AQAGANTRPC (189 aa)). Ca(2+) contacts are provided by aspartate 4258 and leucine 4275. The mediates motor neuron attachment stretch occupies residues 4299–4301 (LRE). Alanine 4325 and asparagine 4327 together coordinate Ca(2+). A disulfide bridge connects residues cysteine 4355 and cysteine 4389. Residues 4364 to 4391 (ARPGAPPPQPLDLQHRAQAGANTRPCPS) form a disordered region.

As to quaternary structure, has a strong tendency to aggregate in dimers or stellate structures. Interacts with other basement membrane components such as laminin, prolargin and collagen type IV. Interacts with COL13A1. Interacts with FGFBP1. Interacts with VWA1. Interacts (via C-terminus) with ECM1 (via C-terminus). Interacts with SVEP1. Proteolytic processing produces the C-terminal angiogenic peptide, endorepellin. This peptide can be further processed to produce the LG3 peptide. Post-translationally, O-glycosylated with core 1 or possibly core 8 glycans. Contains three heparan sulfate chains. Also contains chondroitin sulfate. As to expression, detected in cerebrospinal fluid, fibroblasts and urine (at protein level).

Its subcellular location is the secreted. It is found in the extracellular space. The protein localises to the extracellular matrix. The protein resides in the basement membrane. Integral component of basement membranes. Component of the glomerular basement membrane (GBM), responsible for the fixed negative electrostatic membrane charge, and which provides a barrier which is both size- and charge-selective. It serves as an attachment substrate for cells. Plays essential roles in vascularization. Critical for normal heart development and for regulating the vascular response to injury. Also required for avascular cartilage development. Its function is as follows. Anti-angiogenic and anti-tumor peptide that inhibits endothelial cell migration, collagen-induced endothelial tube morphogenesis and blood vessel growth in the chorioallantoic membrane. Blocks endothelial cell adhesion to fibronectin and type I collagen. Anti-tumor agent in neovascularization. Interaction with its ligand, integrin alpha2/beta1, is required for the anti-angiogenic properties. Evokes a reduction in phosphorylation of receptor tyrosine kinases via alpha2/beta1 integrin-mediated activation of the tyrosine phosphatase, PTPN6. Functionally, has anti-angiogenic properties that require binding of calcium ions for full activity. The protein is Basement membrane-specific heparan sulfate proteoglycan core protein (HSPG2) of Homo sapiens (Human).